A 152-amino-acid polypeptide reads, in one-letter code: MEYGNLRRQAASLKKSLFDQGYLDEQFCQVEDLQDEANPNFAEEVVSLFFKDSTRVMLNFEQAIEKHPKDFARWDTHMQQLKGSCSSIGASRVKNECTSFRNFCGEENAEGCTRSFQKVKREHAVLRQKWESYFQLLRQAGPAGTATRPAGK.

In terms of domain architecture, HPt spans 38 to 140 (NPNFAEEVVS…ESYFQLLRQA (103 aa)).

Functions as a two-component phosphorelay mediator between cytokinin sensor histidine kinases and response regulators (B-type ARRs). Plays an important role in propagating cytokinin signal transduction. The chain is Pseudo histidine-containing phosphotransfer protein 5 from Oryza sativa subsp. japonica (Rice).